We begin with the raw amino-acid sequence, 359 residues long: snRNA-activating protein complex subunit 2 (359 aa).

Basic residues predominate over residues 1-11; that stretch reads MKPPQRRRRVP. Disordered stretches follow at residues 1–22, 157–221, and 291–327; these read MKPP…TGPT, NQDG…GSST, and TALP…SEPI.

In terms of assembly, part of the SNAPc complex composed of 5 subunits: SNAPC1, SNAPC2, SNAPC3, SNAPC4 and SNAPC5. SNAPC2 interacts with TBP and SNAPC4.

The protein localises to the nucleus. Its function is as follows. Part of the SNAPc complex required for the transcription of both RNA polymerase II and III small-nuclear RNA genes. Binds to the proximal sequence element (PSE), a non-TATA-box basal promoter element common to these 2 types of genes. Recruits TBP and BRF2 to the U6 snRNA TATA box. This is snRNA-activating protein complex subunit 2 (Snapc2) from Mus musculus (Mouse).